The sequence spans 330 residues: UPF0324 membrane protein PG_2004 (330 aa).

Transmembrane regions (helical) follow at residues 13 to 31 (IAYPAIIVFLILTLLGSLV), 36 to 58 (PFTSWLTPPVALLMGLAYALIFG), 71 to 93 (VLLQYSVVGLGFGMNLGESLASG), 97 to 114 (MMFTIISVFGTLLLGWFI), 126 to 148 (SALISAGTAICGGSAIAAVGPIL), 158 to 180 (ALGTVFLLNAVALFIFPSIGHWL), 248 to 270 (VPLFILFFIGAIILNTYLLEAYF), 285 to 307 (LTLSLFFIGASLTKEVIASVGVR), and 312 to 329 (GLFLWILISVGSLAFILL).

Belongs to the UPF0324 family.

It localises to the cell membrane. The sequence is that of UPF0324 membrane protein PG_2004 from Porphyromonas gingivalis (strain ATCC BAA-308 / W83).